Consider the following 107-residue polypeptide: MPYIYLIISISTEVIGSAFLKSSEGFSKFIPSLGTIISFGICFYFLSKTMQHLPLNITYATWAGLGLVLTTVVSIIIFKEQINLITIVSIVLIIVGVVSLNIFGTSH.

The next 3 helical transmembrane spans lie at 26–46 (FSKF…FYFL), 57–77 (ITYA…SIII), and 84–104 (LITI…NIFG).

It belongs to the drug/metabolite transporter (DMT) superfamily. Small multidrug resistance (SMR) (TC 2.A.7.1) family.

It localises to the cell membrane. Multidrug exporter. Is implicated for the resistance to bacteriocidal quaternary ammonium compounds. The chain is Quaternary ammonium compound-resistance protein QacC from Staphylococcus sp. (strain ST827).